The primary structure comprises 510 residues: NAD(P)H-quinone oxidoreductase subunit 2, chloroplastic (510 aa).

The next 11 helical transmembrane spans lie at 24-44, 59-79, 99-119, 124-144, 149-169, 183-203, 295-315, 323-343, 347-367, 395-415, and 418-438; these read LLLF…GLIL, WFYF…LFRW, IFQF…VEYI, MAIT…MFLC, LITI…LSGY, YLLM…WLYG, WHLL…LIAI, MLAY…IVGD, GYAS…GTFA, ALSS…AGFF, and LYLF…IGLL.

It belongs to the complex I subunit 2 family. In terms of assembly, NDH is composed of at least 16 different subunits, 5 of which are encoded in the nucleus.

Its subcellular location is the plastid. The protein resides in the chloroplast thylakoid membrane. It carries out the reaction a plastoquinone + NADH + (n+1) H(+)(in) = a plastoquinol + NAD(+) + n H(+)(out). The enzyme catalyses a plastoquinone + NADPH + (n+1) H(+)(in) = a plastoquinol + NADP(+) + n H(+)(out). Functionally, NDH shuttles electrons from NAD(P)H:plastoquinone, via FMN and iron-sulfur (Fe-S) centers, to quinones in the photosynthetic chain and possibly in a chloroplast respiratory chain. The immediate electron acceptor for the enzyme in this species is believed to be plastoquinone. Couples the redox reaction to proton translocation, and thus conserves the redox energy in a proton gradient. The protein is NAD(P)H-quinone oxidoreductase subunit 2, chloroplastic of Asparagus officinalis (Garden asparagus).